Here is a 1170-residue protein sequence, read N- to C-terminus: DNA-directed RNA polymerase subunit beta' (1170 aa).

Zn(2+) contacts are provided by cysteine 60, cysteine 62, cysteine 75, and cysteine 78. Residues aspartate 449, aspartate 451, and aspartate 453 each contribute to the Mg(2+) site. Residues cysteine 774, cysteine 848, cysteine 855, and cysteine 858 each contribute to the Zn(2+) site. The tract at residues 1145–1170 (EPGEENGEPGGERLYGMDELYGETAN) is disordered.

It belongs to the RNA polymerase beta' chain family. As to quaternary structure, the RNAP catalytic core consists of 2 alpha, 1 beta, 1 beta' and 1 omega subunit. When a sigma factor is associated with the core the holoenzyme is formed, which can initiate transcription. The cofactor is Mg(2+). Zn(2+) serves as cofactor.

The catalysed reaction is RNA(n) + a ribonucleoside 5'-triphosphate = RNA(n+1) + diphosphate. Functionally, DNA-dependent RNA polymerase catalyzes the transcription of DNA into RNA using the four ribonucleoside triphosphates as substrates. This is DNA-directed RNA polymerase subunit beta' from Pelotomaculum thermopropionicum (strain DSM 13744 / JCM 10971 / SI).